Consider the following 369-residue polypeptide: tRNA 2-selenouridine synthase (369 aa).

Residues 12–136 (FLDDIPLMDV…LRNFLFETTR (125 aa)) enclose the Rhodanese domain. Catalysis depends on C95, which acts as the S-selanylcysteine intermediate.

It belongs to the SelU family. Monomer.

The enzyme catalyses 5-methylaminomethyl-2-thiouridine(34) in tRNA + selenophosphate + (2E)-geranyl diphosphate + H2O + H(+) = 5-methylaminomethyl-2-selenouridine(34) in tRNA + (2E)-thiogeraniol + phosphate + diphosphate. It carries out the reaction 5-methylaminomethyl-2-thiouridine(34) in tRNA + (2E)-geranyl diphosphate = 5-methylaminomethyl-S-(2E)-geranyl-thiouridine(34) in tRNA + diphosphate. The catalysed reaction is 5-methylaminomethyl-S-(2E)-geranyl-thiouridine(34) in tRNA + selenophosphate + H(+) = 5-methylaminomethyl-2-(Se-phospho)selenouridine(34) in tRNA + (2E)-thiogeraniol. It catalyses the reaction 5-methylaminomethyl-2-(Se-phospho)selenouridine(34) in tRNA + H2O = 5-methylaminomethyl-2-selenouridine(34) in tRNA + phosphate. In terms of biological role, involved in the post-transcriptional modification of the uridine at the wobble position (U34) of tRNA(Lys), tRNA(Glu) and tRNA(Gln). Catalyzes the conversion of 2-thiouridine (S2U-RNA) to 2-selenouridine (Se2U-RNA). Acts in a two-step process involving geranylation of 2-thiouridine (S2U) to S-geranyl-2-thiouridine (geS2U) and subsequent selenation of the latter derivative to 2-selenouridine (Se2U) in the tRNA chain. The sequence is that of tRNA 2-selenouridine synthase from Pseudomonas aeruginosa (strain LESB58).